The following is a 705-amino-acid chain: Kinesin-like protein KIF2A (705 aa).

The interval 1–216 (MATANFGKIQ…LDYRPLTTAD (216 aa)) is globular. Residues 65-186 (DLVPDEDIEP…QELREKRAQD (122 aa)) are disordered. A Phosphoserine modification is found at serine 75. A Phosphothreonine modification is found at threonine 96. Lysine 101 carries the N6-acetyllysine modification. Positions 122–139 (LPEQSSSAQQNGSVSDIS) are enriched in polar residues. Phosphoserine is present on residues serine 134 and serine 139. Over residues 158-186 (CVKEVEKLQEKREKRRLQQQELREKRAQD) the composition is skewed to basic and acidic residues. In terms of domain architecture, Kinesin motor spans 222 to 552 (RICVCVRKRP…LRYANRVKEL (331 aa)). 312–319 (GQTGSGKT) serves as a coordination point for ATP. Threonine 528 and tyrosine 545 each carry phosphoserine. Residues 659 to 698 (ATQLEAILEQKIDILTELRDKVKSFRAALQEEEQASKQIN) are a coiled coil.

It belongs to the TRAFAC class myosin-kinesin ATPase superfamily. Kinesin family. MCAK/KIF2 subfamily. In terms of assembly, interacts with AURKA and PLK1. Interacts with PSRC1. Interacts with MCRS1; the interaction enhances recruitment of KIF2A to the minus ends of spindle microtubules which promotes chromosome alignment. In terms of tissue distribution, highest level in lung. High level in ovary, moderate levels in heart, kidney, placenta, skeletal muscle and spleen (at protein level). Pancreas and spleen express a shorter isoform (at protein level). Expressed in the flagellum of elongated spermatids and sperm in the testis lumen (at protein level). Isoform 1 expressed in neuronal cells. Isoform 2 expressed in astrocytes and fibroblasts.

It localises to the cytoplasm. It is found in the cytoskeleton. The protein resides in the microtubule organizing center. Its subcellular location is the centrosome. The protein localises to the spindle pole. It localises to the spindle. It is found in the lysosome. In terms of biological role, plus end-directed microtubule-dependent motor required for normal brain development. May regulate microtubule dynamics during axonal growth. Required for normal progression through mitosis. Required for normal congress of chromosomes at the metaphase plate. Required for normal spindle dynamics during mitosis. Promotes spindle turnover. Implicated in formation of bipolar mitotic spindles. Has microtubule depolymerization activity. The polypeptide is Kinesin-like protein KIF2A (Kif2a) (Mus musculus (Mouse)).